The chain runs to 489 residues: uncharacterized protein (489 aa).

Disordered stretches follow at residues 1-94 (MIEE…GSLD), 109-229 (NRNQ…SDDD), 300-389 (DDNI…TSIQ), and 428-461 (SESGRSISSPILIPSPTLSSKSNNQENDDPTLVK). Composition is skewed to low complexity over residues 43 to 53 (LLVQQSNQSVK) and 64 to 77 (SNGFNNNNSSNIHD). Acidic residues predominate over residues 121–138 (NFSEDDEDDDAEDDDSSD). Positions 144 to 154 (KKNKPKKPSKL) are enriched in basic residues. Residues 155–164 (MKHDSVDGKN) are compositionally biased toward basic and acidic residues. Residues 173-199 (SKKKVQHQLKEKNKKKGIKNDKKKSKP) are compositionally biased toward basic residues. Acidic residues predominate over residues 308–343 (NDNDNDNDDDNDNDNDNDNDNDNDNDDDENGEDNGE). 2 stretches are compositionally biased toward low complexity: residues 344 to 389 (DLNI…TSIQ) and 433 to 449 (SISSPILIPSPTLSSKS).

This is an uncharacterized protein from Dictyostelium discoideum (Social amoeba).